Reading from the N-terminus, the 393-residue chain is Methylthioribose-1-phosphate isomerase (393 aa).

The active-site Proton donor is the Asp265.

This sequence belongs to the eIF-2B alpha/beta/delta subunits family. MtnA subfamily.

It localises to the cytoplasm. It is found in the nucleus. The catalysed reaction is 5-(methylsulfanyl)-alpha-D-ribose 1-phosphate = 5-(methylsulfanyl)-D-ribulose 1-phosphate. Its pathway is amino-acid biosynthesis; L-methionine biosynthesis via salvage pathway; L-methionine from S-methyl-5-thio-alpha-D-ribose 1-phosphate: step 1/6. Functionally, catalyzes the interconversion of methylthioribose-1-phosphate (MTR-1-P) into methylthioribulose-1-phosphate (MTRu-1-P). The sequence is that of Methylthioribose-1-phosphate isomerase from Cryptococcus neoformans var. neoformans serotype D (strain B-3501A) (Filobasidiella neoformans).